The chain runs to 131 residues: Ribonuclease VapC42 (131 aa).

In terms of domain architecture, PINc spans 1–125 (MIVDTSAIVA…FRGDDFTHTD (125 aa)). 2 residues coordinate Mg(2+): aspartate 4 and aspartate 100.

The protein belongs to the PINc/VapC protein family. Requires Mg(2+) as cofactor.

Its function is as follows. Toxic component of a type II toxin-antitoxin (TA) system. An RNase. Its cognate antitoxin is VapB42. The chain is Ribonuclease VapC42 from Mycobacterium tuberculosis (strain CDC 1551 / Oshkosh).